A 154-amino-acid chain; its full sequence is Endoribonuclease YbeY (154 aa).

Zn(2+) contacts are provided by H114, H118, and H124.

This sequence belongs to the endoribonuclease YbeY family. Zn(2+) is required as a cofactor.

The protein localises to the cytoplasm. Single strand-specific metallo-endoribonuclease involved in late-stage 70S ribosome quality control and in maturation of the 3' terminus of the 16S rRNA. This Histophilus somni (strain 2336) (Haemophilus somnus) protein is Endoribonuclease YbeY.